The primary structure comprises 282 residues: Aquaporin NIP1-1 (282 aa).

A run of 2 helical transmembrane segments spans residues 46-66 (IIAE…AVTI) and 74-94 (ITFP…VYAV). The NPA 1 signature appears at 103–105 (NPA). Transmembrane regions (helical) follow at residues 125 to 145 (VLAQ…MFGG), 162 to 182 (SLVI…GVAT), and 186 to 206 (AIGE…VLIA). Residues 215-217 (NPA) carry the NPA 2 motif. The chain crosses the membrane as a helical span at residues 232 to 252 (IWVYVVGPVVGAVAGAWAYNL).

The protein belongs to the MIP/aquaporin (TC 1.A.8) family. NIP (TC 1.A.8.12) subfamily.

The protein resides in the membrane. Functionally, aquaporins facilitate the transport of water and small neutral solutes across cell membranes. In Zea mays (Maize), this protein is Aquaporin NIP1-1 (NIP1-1).